Here is a 314-residue protein sequence, read N- to C-terminus: Transcriptional regulatory protein GlnL (314 aa).

The Response regulatory domain occupies Arg-2–Lys-118. At Asp-54 the chain carries 4-aspartylphosphate.

Phosphorylated by GlnK.

The protein localises to the cytoplasm. Functionally, member of the two-component regulatory system GlnL/GlnK that positively regulates the expression of the glsA-glnT operon in response to glutamine. GlnL binds the promoter region of glsA-glnT in vitro. This Bacillus subtilis (strain 168) protein is Transcriptional regulatory protein GlnL (glnL).